The chain runs to 287 residues: Phosphatidylinositol transfer protein 5 (287 aa).

A disordered region spans residues 252–287 (FHNNNNNNSNNSNNNNNNNTQPQRSSFFSRSTDGNK). Low complexity predominate over residues 254-270 (NNNNNNSNNSNNNNNNN). The segment covering 271-287 (TQPQRSSFFSRSTDGNK) has biased composition (polar residues).

Belongs to the PtdIns transfer protein family. PI transfer class IIA subfamily.

Its function is as follows. Phosphatidylinositol transfer proteins mediate the monomeric transport of lipids by shielding a lipid from the aqueous environment and binding the lipid in a hydrophobic cavity. The protein is Phosphatidylinositol transfer protein 5 (pitE) of Dictyostelium discoideum (Social amoeba).